A 181-amino-acid chain; its full sequence is Large ribosomal subunit protein uL5 (181 aa).

Belongs to the universal ribosomal protein uL5 family. Part of the 50S ribosomal subunit; part of the 5S rRNA/L5/L18/L25 subcomplex. Contacts the 5S rRNA and the P site tRNA. Forms a bridge to the 30S subunit in the 70S ribosome.

Its function is as follows. This is one of the proteins that bind and probably mediate the attachment of the 5S RNA into the large ribosomal subunit, where it forms part of the central protuberance. In the 70S ribosome it contacts protein S13 of the 30S subunit (bridge B1b), connecting the 2 subunits; this bridge is implicated in subunit movement. Contacts the P site tRNA; the 5S rRNA and some of its associated proteins might help stabilize positioning of ribosome-bound tRNAs. This Helicobacter pylori (strain Shi470) protein is Large ribosomal subunit protein uL5.